A 578-amino-acid chain; its full sequence is Dystrotelin (578 aa).

The segment at 223 to 279 adopts a ZZ-type zinc-finger fold; the sequence is THPARCTLCRTFPITGLRYRCLKCLNFDICQMCFLSGLHSKSHQKSHPVIEHCIQMS. Zn(2+) contacts are provided by C228, C231, C243, C246, C252, C255, H265, and H269. Residues 322–351 are a coiled coil; that stretch reads HHAQARLLKKQLNQYKDKLQAIYTSQEERI. Positions 382–475 are disordered; the sequence is RLQPPGPSSS…QSQTQKMPQK (94 aa). Composition is skewed to basic and acidic residues over residues 399-410 and 431-451; these read KVDHSSTEKVPK and PKLD…HALR. Polar residues predominate over residues 455–472; it reads SPETTLHSTRAQSQTQKM. Residues 503–537 adopt a coiled-coil conformation; that stretch reads ALAAVEKKEAGNIKERKDELEEEELQELLSKLMDA.

The protein localises to the cell membrane. This Homo sapiens (Human) protein is Dystrotelin (DYTN).